An 888-amino-acid chain; its full sequence is Endochitinase A1 (888 aa).

The first 22 residues, 1-22 (MVSSKLSFVATAVAALAPLASA), serve as a signal peptide directing secretion. The GH18 domain occupies 29-338 (SNLAIYWGQG…DHMKDILLHC (310 aa)). Glutamate 174 (proton donor) is an active-site residue. 3 disordered regions span residues 338-631 (CDPS…TTTA), 743-799 (PVTE…VSTS), and 813-855 (PLIL…YTQE). Low complexity predominate over residues 344-617 (VTSSSAIPSS…STDESSTTVG (274 aa)). N-linked (GlcNAc...) asparagine glycosylation occurs at asparagine 622. A compositionally biased stretch (polar residues) spans 764–775 (EGSNPTQPSGAS). Asparagine 780 is a glycosylation site (N-linked (GlcNAc...) asparagine). The span at 835 to 855 (PSGQNSGSSSHVPIPPSYTQE) shows a compositional bias: polar residues. Residue glycine 863 is the site of GPI-anchor amidated glycine attachment. A propeptide spans 864–888 (AASRVTGLGHGLVLTVLTLSAFFVL) (removed in mature form).

It belongs to the glycosyl hydrolase 18 family. Chitinase class III subfamily.

It is found in the cell membrane. Its subcellular location is the secreted. It localises to the cell wall. The catalysed reaction is Random endo-hydrolysis of N-acetyl-beta-D-glucosaminide (1-&gt;4)-beta-linkages in chitin and chitodextrins.. Its activity is regulated as follows. The cyclic peptide natural product argifin acts as a specific inhibitor. Functionally, GPI-anchored chitinase involved in the degradation of chitin, a component of the cell walls of fungi and exoskeletal elements of some animals (including worms and arthropods). Required to reshape the cell wall at the sites where cell wall remodeling and/or cell wall maturation actively take place such as sites of conidia formation. This Aspergillus fumigatus (strain ATCC MYA-4609 / CBS 101355 / FGSC A1100 / Af293) (Neosartorya fumigata) protein is Endochitinase A1 (chiA1).